The sequence spans 340 residues: Insulin gene enhancer protein ISL-2B (340 aa).

LIM zinc-binding domains are found at residues 9–62 and 71–125; these read CVGC…CKRD and CAKC…RADH. Residues 172–231 constitute a DNA-binding region (homeobox); that stretch reads TTRVRTVLNEKQLHTLRTCYNANPRPDALMKEQLVEMTGLSPRVIRVWFQNKRCKDKKRT. A compositionally biased stretch (low complexity) spans 307–317; it reads ESGSMGNSSGS. The segment at 307–340 is disordered; sequence ESGSMGNSSGSDVTSLSSQLPDTPNSMVPSPMDT. Over residues 318–340 the composition is skewed to polar residues; sequence DVTSLSSQLPDTPNSMVPSPMDT.

It is found in the nucleus. Its function is as follows. Binds to one of the cis-acting domain of the insulin gene enhancer. May be involved in subtype specialization of primary motoneurons. The chain is Insulin gene enhancer protein ISL-2B (isl2b) from Oncorhynchus tshawytscha (Chinook salmon).